We begin with the raw amino-acid sequence, 132 residues long: Small ribosomal subunit protein uS8 (132 aa).

Belongs to the universal ribosomal protein uS8 family. As to quaternary structure, part of the 30S ribosomal subunit. Contacts proteins S5 and S12.

Its function is as follows. One of the primary rRNA binding proteins, it binds directly to 16S rRNA central domain where it helps coordinate assembly of the platform of the 30S subunit. This is Small ribosomal subunit protein uS8 from Paenarthrobacter aurescens (strain TC1).